We begin with the raw amino-acid sequence, 701 residues long: Polyribonucleotide nucleotidyltransferase (701 aa).

The Mg(2+) site is built by Asp-485 and Asp-491. A KH domain is found at 552–611 (PKIFKTTVDPEKIRDIIGPGGKMINKIIAKTNVKIDIEPDGRIFVAAPDDISGNRAISMI). In terms of domain architecture, S1 motif spans 621–689 (GQFFLGKVTR…RLGRIALSRK (69 aa)).

The protein belongs to the polyribonucleotide nucleotidyltransferase family. Requires Mg(2+) as cofactor.

The protein localises to the cytoplasm. It carries out the reaction RNA(n+1) + phosphate = RNA(n) + a ribonucleoside 5'-diphosphate. Functionally, involved in mRNA degradation. Catalyzes the phosphorolysis of single-stranded polyribonucleotides processively in the 3'- to 5'-direction. This chain is Polyribonucleotide nucleotidyltransferase, found in Caldicellulosiruptor saccharolyticus (strain ATCC 43494 / DSM 8903 / Tp8T 6331).